The chain runs to 156 residues: Acanthoscurrin-1 (156 aa).

Residues 1 to 23 (MAFRMKLVVCIVLLSTLAVMSSA) form the signal peptide. Position 155 is a lysine amide (Lys-155).

As to expression, expressed in hemocytes and secreted into the plasma following bacterial immune challenge.

Its subcellular location is the secreted. In terms of biological role, antimicrobial protein. Strong activity against the Gram-negative bacterium E.coli SBS363 and yeast C.albicans. No detectable activity against the Gram-positive bacterium M.luteus. The polypeptide is Acanthoscurrin-1 (Acanthoscurria gomesiana (Tarantula spider)).